A 279-amino-acid polypeptide reads, in one-letter code: Biotin synthase (279 aa).

Positions 2–228 constitute a Radical SAM core domain; the sequence is KTIMLCAISS…NARIMIAGGR (227 aa). Cysteine 17, cysteine 21, and cysteine 24 together coordinate [4Fe-4S] cluster. Residues cysteine 61, cysteine 96, cysteine 154, and arginine 221 each contribute to the [2Fe-2S] cluster site.

Belongs to the radical SAM superfamily. Biotin synthase family. As to quaternary structure, homodimer. [4Fe-4S] cluster serves as cofactor. Requires [2Fe-2S] cluster as cofactor.

It carries out the reaction (4R,5S)-dethiobiotin + (sulfur carrier)-SH + 2 reduced [2Fe-2S]-[ferredoxin] + 2 S-adenosyl-L-methionine = (sulfur carrier)-H + biotin + 2 5'-deoxyadenosine + 2 L-methionine + 2 oxidized [2Fe-2S]-[ferredoxin]. The protein operates within cofactor biosynthesis; biotin biosynthesis; biotin from 7,8-diaminononanoate: step 2/2. Functionally, catalyzes the conversion of dethiobiotin (DTB) to biotin by the insertion of a sulfur atom into dethiobiotin via a radical-based mechanism. This chain is Biotin synthase, found in Campylobacter curvus (strain 525.92).